A 439-amino-acid polypeptide reads, in one-letter code: tRNA modification GTPase MnmE (439 aa).

(6S)-5-formyl-5,6,7,8-tetrahydrofolate-binding residues include arginine 20, glutamate 78, and lysine 116. In terms of domain architecture, TrmE-type G spans 211–364 (GIYVTILGEP…LLNLIKQKVE (154 aa)). GTP-binding positions include 221 to 226 (NSGKST), 240 to 246 (SEYAGTT), and 265 to 268 (DTAG). Serine 225 and threonine 246 together coordinate Mg(2+). Lysine 439 contacts (6S)-5-formyl-5,6,7,8-tetrahydrofolate.

The protein belongs to the TRAFAC class TrmE-Era-EngA-EngB-Septin-like GTPase superfamily. TrmE GTPase family. In terms of assembly, homodimer. Heterotetramer of two MnmE and two MnmG subunits. K(+) serves as cofactor.

It localises to the cytoplasm. Functionally, exhibits a very high intrinsic GTPase hydrolysis rate. Involved in the addition of a carboxymethylaminomethyl (cmnm) group at the wobble position (U34) of certain tRNAs, forming tRNA-cmnm(5)s(2)U34. The protein is tRNA modification GTPase MnmE of Ehrlichia chaffeensis (strain ATCC CRL-10679 / Arkansas).